We begin with the raw amino-acid sequence, 94 residues long: MLCSIYKSSKKEGTYLYIPKKDDFSQVPDTLMQMFGKPIPVMTIKLDGRKLAQVDIEKVKASLQNDGFFLQVPPPPENLLEKYKEQKAQQKNEQ.

Positions 1-84 constitute a YcgL domain; the sequence is MLCSIYKSSK…PPENLLEKYK (84 aa).

The polypeptide is YcgL domain-containing protein VP0875 (Vibrio parahaemolyticus serotype O3:K6 (strain RIMD 2210633)).